We begin with the raw amino-acid sequence, 404 residues long: Flavohemoprotein (404 aa).

The Globin domain maps to 1–138; sequence MLSEQTRSLV…LADTLIGIEN (138 aa). His-85 provides a ligand contact to heme b. Catalysis depends on charge relay system residues Tyr-95 and Glu-137. The reductase stretch occupies residues 149–404; the sequence is GGWSGWRPFR…EVFGSHPGDD (256 aa). The 112-residue stretch at 152–263 folds into the FAD-binding FR-type domain; the sequence is SGWRPFRVAK…SAPQGDFFLH (112 aa). FAD is bound by residues Tyr-190 and 206 to 209; that span reads RQYS. NADP(+) is bound at residue 276 to 281; the sequence is GVGQTP. Residue 396-399 participates in FAD binding; that stretch reads VFGS.

Belongs to the globin family. Two-domain flavohemoproteins subfamily. The protein in the C-terminal section; belongs to the flavoprotein pyridine nucleotide cytochrome reductase family. Heme b is required as a cofactor. Requires FAD as cofactor.

The catalysed reaction is 2 nitric oxide + NADPH + 2 O2 = 2 nitrate + NADP(+) + H(+). It catalyses the reaction 2 nitric oxide + NADH + 2 O2 = 2 nitrate + NAD(+) + H(+). In terms of biological role, is involved in NO detoxification in an aerobic process, termed nitric oxide dioxygenase (NOD) reaction that utilizes O(2) and NAD(P)H to convert NO to nitrate, which protects the bacterium from various noxious nitrogen compounds. Therefore, plays a central role in the inducible response to nitrosative stress. The sequence is that of Flavohemoprotein from Chromobacterium violaceum (strain ATCC 12472 / DSM 30191 / JCM 1249 / CCUG 213 / NBRC 12614 / NCIMB 9131 / NCTC 9757 / MK).